The sequence spans 196 residues: Glycerol-3-phosphate acyltransferase (196 aa).

The next 4 membrane-spanning stretches (helical) occupy residues 4–24 (IYIA…GLIL), 70–90 (VLIA…LGAF), 111–131 (IGVL…LWLA), and 152–172 (IFLW…LTLL).

Belongs to the PlsY family. As to quaternary structure, probably interacts with PlsX.

It is found in the cell inner membrane. The catalysed reaction is an acyl phosphate + sn-glycerol 3-phosphate = a 1-acyl-sn-glycero-3-phosphate + phosphate. It functions in the pathway lipid metabolism; phospholipid metabolism. Functionally, catalyzes the transfer of an acyl group from acyl-phosphate (acyl-PO(4)) to glycerol-3-phosphate (G3P) to form lysophosphatidic acid (LPA). This enzyme utilizes acyl-phosphate as fatty acyl donor, but not acyl-CoA or acyl-ACP. This chain is Glycerol-3-phosphate acyltransferase, found in Rhodopseudomonas palustris (strain BisB5).